Here is a 373-residue protein sequence, read N- to C-terminus: Putative F-box/kelch-repeat protein At5g24040 (373 aa).

One can recognise an F-box domain in the interval V2–R50. 2 Kelch repeats span residues N165 to G207 and Y262 to S308.

The protein is Putative F-box/kelch-repeat protein At5g24040 of Arabidopsis thaliana (Mouse-ear cress).